A 197-amino-acid chain; its full sequence is Nucleoside triphosphate pyrophosphatase (197 aa).

Aspartate 74 (proton acceptor) is an active-site residue.

Belongs to the Maf family. A divalent metal cation is required as a cofactor.

It localises to the cytoplasm. The catalysed reaction is a ribonucleoside 5'-triphosphate + H2O = a ribonucleoside 5'-phosphate + diphosphate + H(+). It catalyses the reaction a 2'-deoxyribonucleoside 5'-triphosphate + H2O = a 2'-deoxyribonucleoside 5'-phosphate + diphosphate + H(+). Its function is as follows. Nucleoside triphosphate pyrophosphatase. May have a dual role in cell division arrest and in preventing the incorporation of modified nucleotides into cellular nucleic acids. In Granulibacter bethesdensis (strain ATCC BAA-1260 / CGDNIH1), this protein is Nucleoside triphosphate pyrophosphatase.